A 309-amino-acid chain; its full sequence is Protease HtpX homolog (309 aa).

Transmembrane regions (helical) follow at residues 15–35 (NAVL…VDVI) and 54–74 (IFPT…VVCI). His165 is a Zn(2+) binding site. Glu166 is an active-site residue. His169 contributes to the Zn(2+) binding site. A run of 2 helical transmembrane segments spans residues 181 to 201 (VGIL…FFMG) and 213 to 233 (MILL…QMYL). Glu238 is a binding site for Zn(2+).

Belongs to the peptidase M48B family. Zn(2+) is required as a cofactor.

Its subcellular location is the cell inner membrane. The protein is Protease HtpX homolog of Helicobacter acinonychis (strain Sheeba).